The sequence spans 300 residues: Urease accessory protein UreD (300 aa).

Belongs to the UreD family. In terms of assembly, ureD, UreF and UreG form a complex that acts as a GTP-hydrolysis-dependent molecular chaperone, activating the urease apoprotein by helping to assemble the nickel containing metallocenter of UreC. The UreE protein probably delivers the nickel.

It localises to the cytoplasm. Functionally, required for maturation of urease via the functional incorporation of the urease nickel metallocenter. The sequence is that of Urease accessory protein UreD from Prochlorococcus marinus (strain AS9601).